The following is a 467-amino-acid chain: Argininosuccinate lyase (467 aa).

Residues S27, N114, and T159 each coordinate 2-(N(omega)-L-arginino)succinate. The Proton acceptor role is filled by H160. S281 functions as the Proton donor in the catalytic mechanism. The 2-(N(omega)-L-arginino)succinate site is built by N289, Y321, Q326, and K329.

This sequence belongs to the lyase 1 family. Argininosuccinate lyase subfamily. In terms of assembly, homotetramer.

The enzyme catalyses 2-(N(omega)-L-arginino)succinate = fumarate + L-arginine. It participates in amino-acid biosynthesis; L-arginine biosynthesis; L-arginine from L-ornithine and carbamoyl phosphate: step 3/3. The protein operates within nitrogen metabolism; urea cycle; L-arginine and fumarate from (N(omega)-L-arginino)succinate: step 1/1. This chain is Argininosuccinate lyase (ASL), found in Aquarana catesbeiana (American bullfrog).